Reading from the N-terminus, the 380-residue chain is Cytochrome b (380 aa).

The next 4 helical transmembrane spans lie at 33-53 (FGSLLGLCLATQILTGLFLAM), 77-98 (WLIRNIHANGASFFFICIYMHI), 113-133 (WNIGVVLLLLTMMTAFVGYVL), and 178-198 (FFAFHFLFPFVIAAATVLHLL). Residues H83 and H97 each contribute to the heme b site. Heme b is bound by residues H182 and H196. H201 is an a ubiquinone binding site. The next 4 helical transmembrane spans lie at 226 to 246 (YKDLLGFVAMLLGLTSLALFA), 288 to 308 (LGGVLALLFSILVLMVVPILH), 320 to 340 (LTQFLFWTLVADMLILTWIGG), and 347 to 367 (FIIIGQVASVIYFTIFLVLAP).

This sequence belongs to the cytochrome b family. The cytochrome bc1 complex contains 3 respiratory subunits (MT-CYB, CYC1 and UQCRFS1), 2 core proteins (UQCRC1 and UQCRC2) and probably 6 low-molecular weight proteins. The cofactor is heme b.

The protein resides in the mitochondrion inner membrane. Component of the ubiquinol-cytochrome c reductase complex (complex III or cytochrome b-c1 complex) that is part of the mitochondrial respiratory chain. The b-c1 complex mediates electron transfer from ubiquinol to cytochrome c. Contributes to the generation of a proton gradient across the mitochondrial membrane that is then used for ATP synthesis. This Salmo trutta (Brown trout) protein is Cytochrome b (mt-cyb).